Here is a 160-residue protein sequence, read N- to C-terminus: Heme transporter hrg-5 (160 aa).

A helical transmembrane segment spans residues 21–41; the sequence is IALTILDILIGFSNILSYAIQ. N44 carries N-linked (GlcNAc...) asparagine glycosylation. 3 helical membrane-spanning segments follow: residues 47–67, 89–109, and 123–142; these read ALTL…MFLA, ITLG…AGVT, and FTGL…ALLA. N144 carries N-linked (GlcNAc...) asparagine glycosylation.

The protein belongs to the HRG family.

Its subcellular location is the membrane. Heme transporter. This chain is Heme transporter hrg-5 (hrg-5), found in Caenorhabditis elegans.